The sequence spans 228 residues: uncharacterized protein (228 aa).

The first 23 residues, 1–23 (MIRHTRLLLASLCLIATGARASA), serve as a signal peptide directing secretion.

This is an uncharacterized protein from Methylorubrum extorquens (strain ATCC 14718 / DSM 1338 / JCM 2805 / NCIMB 9133 / AM1) (Methylobacterium extorquens).